Consider the following 1407-residue polypeptide: DNA-directed RNA polymerase subunit beta' (1407 aa).

Zn(2+) contacts are provided by cysteine 70, cysteine 72, cysteine 85, and cysteine 88. Mg(2+) is bound by residues aspartate 460, aspartate 462, and aspartate 464. Positions 814, 888, 895, and 898 each coordinate Zn(2+). N6-acetyllysine is present on lysine 972.

The protein belongs to the RNA polymerase beta' chain family. The RNAP catalytic core consists of 2 alpha, 1 beta, 1 beta' and 1 omega subunit. When a sigma factor is associated with the core the holoenzyme is formed, which can initiate transcription. The cofactor is Mg(2+). It depends on Zn(2+) as a cofactor.

The enzyme catalyses RNA(n) + a ribonucleoside 5'-triphosphate = RNA(n+1) + diphosphate. Its function is as follows. DNA-dependent RNA polymerase catalyzes the transcription of DNA into RNA using the four ribonucleoside triphosphates as substrates. The sequence is that of DNA-directed RNA polymerase subunit beta' from Escherichia coli (strain SMS-3-5 / SECEC).